The chain runs to 343 residues: Allantoicase (343 aa).

Belongs to the allantoicase family.

The enzyme catalyses allantoate + H2O = (S)-ureidoglycolate + urea. It functions in the pathway nitrogen metabolism; (S)-allantoin degradation; (S)-ureidoglycolate from allantoate (aminidohydrolase route): step 1/1. In terms of biological role, utilization of purines as secondary nitrogen sources, when primary sources are limiting. The sequence is that of Allantoicase (DAL2) from Saccharomyces cerevisiae (strain ATCC 204508 / S288c) (Baker's yeast).